The chain runs to 546 residues: Chaperonin GroEL (546 aa).

Residues 30 to 33 (TLGP), lysine 51, 87 to 91 (DGTTT), glycine 415, 479 to 481 (NAA), and aspartate 495 contribute to the ATP site. The interval 526–546 (KKDEPAMPAGGGMGGMGGMDF) is disordered. A compositionally biased stretch (gly residues) spans 534–546 (AGGGMGGMGGMDF).

Belongs to the chaperonin (HSP60) family. As to quaternary structure, forms a cylinder of 14 subunits composed of two heptameric rings stacked back-to-back. Interacts with the co-chaperonin GroES.

Its subcellular location is the cytoplasm. It catalyses the reaction ATP + H2O + a folded polypeptide = ADP + phosphate + an unfolded polypeptide.. In terms of biological role, together with its co-chaperonin GroES, plays an essential role in assisting protein folding. The GroEL-GroES system forms a nano-cage that allows encapsulation of the non-native substrate proteins and provides a physical environment optimized to promote and accelerate protein folding. This Xanthomonas campestris pv. campestris (strain 8004) protein is Chaperonin GroEL.